We begin with the raw amino-acid sequence, 148 residues long: Putative cyclin-dependent kinase inhibitor SPL2 (148 aa).

A phosphoserine mark is found at Ser-59 and Ser-86.

It is found in the cytoplasmic granule. The protein resides in the cytoplasm. In terms of biological role, putative cyclin-dependent kinase (CDK) inhibitor necessary and sufficient for PHO pathway-dependent down-regulation of low-affinity phosphate transport. This chain is Putative cyclin-dependent kinase inhibitor SPL2 (SPL2), found in Saccharomyces cerevisiae (strain YJM789) (Baker's yeast).